The following is a 190-amino-acid chain: Potassium-transporting ATPase KdpC subunit (190 aa).

Residues 13 to 33 traverse the membrane as a helical segment; it reads LLLILTLITGILYPIVTTGFA.

Belongs to the KdpC family. As to quaternary structure, the system is composed of three essential subunits: KdpA, KdpB and KdpC.

The protein localises to the cell inner membrane. In terms of biological role, part of the high-affinity ATP-driven potassium transport (or Kdp) system, which catalyzes the hydrolysis of ATP coupled with the electrogenic transport of potassium into the cytoplasm. This subunit acts as a catalytic chaperone that increases the ATP-binding affinity of the ATP-hydrolyzing subunit KdpB by the formation of a transient KdpB/KdpC/ATP ternary complex. The chain is Potassium-transporting ATPase KdpC subunit from Leptospira interrogans serogroup Icterohaemorrhagiae serovar copenhageni (strain Fiocruz L1-130).